Consider the following 123-residue polypeptide: uncharacterized protein (123 aa).

4 consecutive transmembrane segments (helical) span residues 9-31, 38-56, 67-91, and 98-114; these read LLLR…WISF, VLTL…VFAV, VIAV…AALY, and VSIV…IISA.

This sequence to E.coli YhgE.

The protein resides in the cell membrane. This is an uncharacterized protein from Bacillus subtilis (strain 168).